Here is a 185-residue protein sequence, read N- to C-terminus: Ribosome-recycling factor (185 aa).

It belongs to the RRF family.

The protein resides in the cytoplasm. Responsible for the release of ribosomes from messenger RNA at the termination of protein biosynthesis. May increase the efficiency of translation by recycling ribosomes from one round of translation to another. The chain is Ribosome-recycling factor from Pseudoalteromonas atlantica (strain T6c / ATCC BAA-1087).